A 484-amino-acid chain; its full sequence is Neuronal acetylcholine receptor subunit alpha-9 (484 aa).

Residues 1–27 (MKRNNLSSFYVSLWLLFTATMLQAVES) form the signal peptide. At 28–240 (AKGKYAQMLF…FTLILKRKSS (213 aa)) the chain is on the extracellular side. N59 carries N-linked (GlcNAc...) asparagine glycosylation. C157 and C171 are disulfide-bonded. N172 is a glycosylation site (N-linked (GlcNAc...) asparagine). Na(+)-binding residues include S193 and D195. Residues C221 and C222 are joined by a disulfide bond. Helical transmembrane passes span 241-261 (FYIF…PLGF), 271-291 (VSLG…VAEI), and 305-325 (YIAT…IMNV). Residues 326-462 (HHCGSEAKPV…WKKVAKVMDR (137 aa)) lie on the Cytoplasmic side of the membrane. A disordered region spans residues 364 to 395 (RREKEQEHRLEGGDMCRGGDGKSHLSSRNDDS). A helical membrane pass occupies residues 463-483 (FFMWIFFIMVFFMSVLIIGKA).

The protein belongs to the ligand-gated ion channel (TC 1.A.9) family. Acetylcholine receptor (TC 1.A.9.1) subfamily. Alpha-9/CHRNA9 sub-subfamily. Forms homo- or heteropentameric channels in conjunction with CHRNA10. The native outer hair cell receptor is composed of CHRNA9:CHRNA10 heterooligomers. Found in the stoichiometric form (CHRNA9)2:(CHRNA10)3. In terms of tissue distribution, expressed in hair cells of the cochlea (at protein level). Expressed in hair cells of the cochlea.

Its subcellular location is the synaptic cell membrane. The protein resides in the cell membrane. The enzyme catalyses Ca(2+)(in) = Ca(2+)(out). It carries out the reaction K(+)(in) = K(+)(out). It catalyses the reaction Na(+)(in) = Na(+)(out). The catalysed reaction is Mg(2+)(in) = Mg(2+)(out). Its activity is regulated as follows. Activated by a myriad of ligands such as acetylcholine. AChR activity is inhibited by the antagonist alpha-conotoxins RgIA and GeXXA, small disulfide-constrained peptides from cone snails. Functionally, component of neuronal acetylcholine receptors (nAChRs) that function as pentameric, ligand-gated cation channels with high calcium permeability among other activities. nAChRs are excitatory neurotrasnmitter receptors formed by a collection of nAChR subunits known to mediate synaptic transmission in the nervous system and the neuromuscular junction. Each nAchR subunit confers differential attributes to channel properties, including activation, deactivation and desensitization kinetics, pH sensitivity, cation permeability, and binding to allosteric modulators. Forms either homopentamers or heteropentamers with CHRNA10. Expressed in the inner ear, in sympathetic neurons and in other non-neuronal cells, such as skin keratinocytes and lymphocytes. The channel is permeable to a range of divalent cations including calcium, the influx of which may activate a potassium current which hyperpolarizes the cell membrane. The chain is Neuronal acetylcholine receptor subunit alpha-9 (CHRNA9) from Gallus gallus (Chicken).